The following is a 244-amino-acid chain: Phosphate propanoyltransferase (244 aa).

Residue Ile52 to Ala54 coordinates CoA. 2 residues coordinate Zn(2+): His56 and His58. Arg106 contacts CoA. Phosphate is bound at residue Arg112. Zn(2+)-binding residues include Glu118, His166, His168, and His214. Asn221 serves as a coordination point for CoA.

This sequence belongs to the PduL family. As to quaternary structure, full-length protein forms large oligomers. Possible homotrimer and monomer, when purified in the absence of the encapsulation peptide (EP, residues 1-20). The EP may influence oligomerization. Zn(2+) serves as cofactor.

The protein localises to the bacterial microcompartment. The catalysed reaction is propanoyl-CoA + phosphate = propanoyl phosphate + CoA. In terms of biological role, part of a bacterial microcompartment (BMC) locus required for growth on plant and algal sugars, including L-fucose and L-rhamnose. Thought to be active on lactyl-CoA in a lactaldehyde-degradation pathway. CoA is regenerated within the BMC via this enzyme, although there must also be cofactor transport across the BMC. Directly targeted to the BMC. The chain is Phosphate propanoyltransferase from Planctopirus limnophila (strain ATCC 43296 / DSM 3776 / IFAM 1008 / Mu 290) (Planctomyces limnophilus).